Reading from the N-terminus, the 407-residue chain is MSESAFSNRIVQSLLDTDFYKLTMMQAVLHNYPNVDVEWEFRCRNGEDLRPYLDEIRHQIELLCELSLSPEHLAFLERITFIKPDFLRFLGLFRFNTRYVKTSIENDELCIRLHGPWLHVILFEVPLLAIVSEVRNRHRYPDTLLSQARDRLYDKFEWLTTHATADELAELKVADFGTRRRFSYRVQEEMLGVLKNDFPGQFVGTSNVHLARQLDLKPLGTMAHEWIMAHQQLGPRLIDSQIAALDCWVREYRGLLGIALTDCITTDAFLNDFDLYFAKLFDGLRHDSGDPVKWAEKCISHYQKLGIDPMSKTLVFSDGLNLPKALDIFRALRGRINVSFGIGTNLTADIPGIAPMNMVLKMTACAGQAVAKISDEPGKTQCKDPNFVAYLRHVFKVPDLPSPEKPA.

A Phosphohistidine; by autocatalysis modification is found at H224.

This sequence belongs to the NAPRTase family. In terms of processing, transiently phosphorylated on a His residue during the reaction cycle. Phosphorylation strongly increases the affinity for substrates and increases the rate of nicotinate D-ribonucleotide production. Dephosphorylation regenerates the low-affinity form of the enzyme, leading to product release.

It carries out the reaction nicotinate + 5-phospho-alpha-D-ribose 1-diphosphate + ATP + H2O = nicotinate beta-D-ribonucleotide + ADP + phosphate + diphosphate. It functions in the pathway cofactor biosynthesis; NAD(+) biosynthesis; nicotinate D-ribonucleotide from nicotinate: step 1/1. Its function is as follows. Catalyzes the synthesis of beta-nicotinate D-ribonucleotide from nicotinate and 5-phospho-D-ribose 1-phosphate at the expense of ATP. This is Nicotinate phosphoribosyltransferase from Pseudomonas savastanoi pv. phaseolicola (strain 1448A / Race 6) (Pseudomonas syringae pv. phaseolicola (strain 1448A / Race 6)).